The chain runs to 228 residues: Ribulose-phosphate 3-epimerase, cytoplasmic isoform (228 aa).

Position 12 (Ser-12) interacts with substrate. A divalent metal cation contacts are provided by His-37, Asp-39, and His-70. The active-site Proton acceptor is the Asp-39. Residues His-70, Gly-150–Gly-153, Asp-179–Gly-181, and Gly-201–Ser-202 contribute to the substrate site. Position 179 (Asp-179) interacts with a divalent metal cation. The active-site Proton donor is Asp-179.

Belongs to the ribulose-phosphate 3-epimerase family. In terms of assembly, homodimer. Co(2+) is required as a cofactor. The cofactor is Fe(2+). Mn(2+) serves as cofactor. It depends on Zn(2+) as a cofactor. In terms of tissue distribution, predominantly accumulates in roots and seedlings.

The protein localises to the cytoplasm. The enzyme catalyses D-ribulose 5-phosphate = D-xylulose 5-phosphate. It functions in the pathway carbohydrate degradation; pentose phosphate pathway; D-xylulose 5-phosphate from D-ribulose 5-phosphate (non-oxidative stage): step 1/1. Its function is as follows. Catalyzes the reversible epimerization of D-ribulose 5-phosphate to D-xylulose 5-phosphate. In Oryza sativa subsp. japonica (Rice), this protein is Ribulose-phosphate 3-epimerase, cytoplasmic isoform.